Reading from the N-terminus, the 451-residue chain is MTENEQIFWNRVLELAQSQLKQATYEFFVHDARLLKVDKHIATIYLDQMKELFWEKNLKDVILTAGFEVYNAQISVDYVFEEDLMIEQNQTKINQKPKQQALNSLPTVTSDLNSKYSFENFIQGDENRWAVAASIAVANTPGTTYNPLFIWGGPGLGKTHLLNAIGNSVLLENPNARIKYITAENFINEFVIHIRLDTMDELKEKFRNLDLLLIDDIQSLAKKTLSGTQEEFFNTFNALHNNNKQIVLTSDRTPDHLNDLEDRLVTRFKWGLTVNITPPDFETRVAILTNKIQEYNFIFPQDTIEYLAGQFDSNVRDLEGALKDISLVANFKQIDTITVDIAAEAIRARKQDGPKMTVIPIEEIQAQVGKFYGVTVKEIKATKRTQNIVLARQVAMFLAREMTDNSLPKIGKEFGGRDHSTVLHAYNKIKNMISQDESLRIEIETIKNKIK.

Residues 1–77 (MTENEQIFWN…EVYNAQISVD (77 aa)) form a domain I, interacts with DnaA modulators region. The tract at residues 77–110 (DYVFEEDLMIEQNQTKINQKPKQQALNSLPTVTS) is domain II. Positions 111-329 (DLNSKYSFEN…GALKDISLVA (219 aa)) are domain III, AAA+ region. Gly-155, Gly-157, Lys-158, and Thr-159 together coordinate ATP. Residues 330 to 451 (NFKQIDTITV…EIETIKNKIK (122 aa)) form a domain IV, binds dsDNA region.

Belongs to the DnaA family. Oligomerizes as a right-handed, spiral filament on DNA at oriC.

Its subcellular location is the cytoplasm. Plays an essential role in the initiation and regulation of chromosomal replication. ATP-DnaA binds to the origin of replication (oriC) to initiate formation of the DNA replication initiation complex once per cell cycle. Binds the DnaA box (a 9 base pair repeat at the origin) and separates the double-stranded (ds)DNA. Forms a right-handed helical filament on oriC DNA; dsDNA binds to the exterior of the filament while single-stranded (ss)DNA is stabiized in the filament's interior. The ATP-DnaA-oriC complex binds and stabilizes one strand of the AT-rich DNA unwinding element (DUE), permitting loading of DNA polymerase. After initiation quickly degrades to an ADP-DnaA complex that is not apt for DNA replication. Binds acidic phospholipids. Functionally, the half-life of ATP-DnaA is 12 minutes at 37 degrees Celsius, in E.coli the half-life is about 41 minutes. The sequence is that of Chromosomal replication initiator protein DnaA from Streptococcus pyogenes serotype M1.